The following is a 440-amino-acid chain: C-terminal-binding protein 1 (440 aa).

Residues serine 100, 180-185 (IGLGRV), aspartate 204, 237-243 (CGLNEHN), 264-266 (TAR), and aspartate 290 contribute to the NAD(+) site. Arginine 266 is an active-site residue. Glutamate 295 is an active-site residue. Histidine 315 acts as the Proton donor in catalysis. Position 315-318 (315-318 (HAAW)) interacts with NAD(+). A disordered region spans residues 409–440 (HAHPAVAHPPHAPSPGQTIKPEADRDHPSDQL). Basic and acidic residues predominate over residues 429–440 (PEADRDHPSDQL).

It belongs to the D-isomer specific 2-hydroxyacid dehydrogenase family. Requires NAD(+) as cofactor.

It localises to the nucleus. Functionally, corepressor targeting diverse transcription regulators. Has dehydrogenase activity. The polypeptide is C-terminal-binding protein 1 (ctbp1) (Xenopus laevis (African clawed frog)).